The following is a 192-amino-acid chain: Protein GrpE (192 aa).

Residues 1–34 (MSSKEQKTPNEQVSEEMENTAEQQVEATQETGEC) are disordered. Over residues 20–31 (TAEQQVEATQET) the composition is skewed to polar residues.

It belongs to the GrpE family. As to quaternary structure, homodimer.

It localises to the cytoplasm. In terms of biological role, participates actively in the response to hyperosmotic and heat shock by preventing the aggregation of stress-denatured proteins, in association with DnaK and GrpE. It is the nucleotide exchange factor for DnaK and may function as a thermosensor. Unfolded proteins bind initially to DnaJ; upon interaction with the DnaJ-bound protein, DnaK hydrolyzes its bound ATP, resulting in the formation of a stable complex. GrpE releases ADP from DnaK; ATP binding to DnaK triggers the release of the substrate protein, thus completing the reaction cycle. Several rounds of ATP-dependent interactions between DnaJ, DnaK and GrpE are required for fully efficient folding. The polypeptide is Protein GrpE (Yersinia pestis).